The primary structure comprises 333 residues: Transcription factor MYB94 (333 aa).

HTH myb-type domains lie at 9 to 65 and 66 to 116; these read KIGV…RPGI and KRGN…KKKL. 2 consecutive DNA-binding regions (H-T-H motif) follow at residues 37–61 and 89–112; these read WRSV…TNYL and WAAI…NTHL. A compositionally biased stretch (polar residues) spans 134 to 154; that stretch reads KDFSISNKNTTSHQSSNSSKG. Disordered regions lie at residues 134 to 157 and 183 to 218; these read KDFS…GQWE and PTNF…YPSG. The span at 196 to 209 shows a compositional bias: low complexity; sequence SSSSSSTTTTTTTT.

Expressed in germinating seeds, rosette and cauline leaves, flower buds, open flowers, stems and developing siliques.

The protein resides in the nucleus. Functionally, transcription activator involved in the activation of cuticular wax biosynthesis under drought stress. Binds directly to the promoters of genes involved in cuticular wax biosynthesis. Transactivates WSD1, KCS2/DAISY, CER1, CER2, FAR3 and ECR genes. Functions together with MYB96 in the activation of cuticular wax biosynthesis. This is Transcription factor MYB94 from Arabidopsis thaliana (Mouse-ear cress).